We begin with the raw amino-acid sequence, 156 residues long: rRNA methyltransferase (156 aa).

Its function is as follows. Modifies 16S rRNA so making ribosomes resistant to certain aminoglycosides. The protein is rRNA methyltransferase (kamC) of Saccharopolyspora hirsuta.